The sequence spans 136 residues: uncharacterized protein (136 aa).

Disordered regions lie at residues 23–44 (QESLKSRIEDKNGDVASPKEDN) and 56–95 (DGVITSEEGCSSSGEKENSGLCSEESSEEDPEEAEEESAR). Positions 61 to 79 (SEEGCSSSGEKENSGLCSE) are enriched in low complexity. Positions 80–91 (ESSEEDPEEAEE) are enriched in acidic residues.

This is an uncharacterized protein from Saccharomyces cerevisiae (strain ATCC 204508 / S288c) (Baker's yeast).